The sequence spans 781 residues: MTPYRPEFSAAEQSRIDAEFSRLARNKTVYLDHAGTTLYAENQVTAAAEQLQRNVICNPHTCRLTGDFVDQVRFKILEFFNTTAEDYHVIFTANATAALSLVAENFDFGSSGDFHFCQENHTSVLGMRERVRANGIYMLREKEISGGGAKENGTVHQVSGKTGNSLVTFSAQCNFSGYKIPLDSIEKIQNYGLSKPGKQLWSALGDKKEHTHNDYYICLDAASFVATSPLDLRKYRPDYVCLSFYKIFGYPTGVGALLVSRRGAEVFQKRRFFGGGTINYAFPHAMDYQLRETFHQRYEDGTLPFLSIVGLLEGFRTLERLVPKTDEFSTMERISRHVFGLAKYVEDQLRQLQHPNGEPLVELYNKVGYQDKARQGGIVAFNVRTESGSFVGFGEIACVAALHGILLRTGCFCNIGACQYYLGLDEDALDSIYKRAGRICGDYFDLVDGQPTGAVRVSFGYMTTIQDVEQLLQMLRSSYLATKPLQRIQFIEEQAEQLPPLLKERVQLLRPKLLQMAIYPVKSCAAFKIESPGSWPLTDQGLKYDREWMIVDMNGMALTQKRCTELCLIRPVIKVDQLELQFGDNSHFSVPLSLEDQAADSAKCVSKVCRQPVEGLDCGDAVAQWLSENLGLEGLRLLRQSGQRNSSKDQQKLSLVNQAQFLLLNRSSVRSLQFEEPLDETVDRFRANIIIDTGSAFEELTYKALSIGGIQFQVEGPCQRCDMICINQRTGERSPETLTTISRLQKGRMRFGIYITRIPPDTKDLEPKEQHMTCGDVVIVE.

K246 bears the N6-(pyridoxal phosphate)lysine mark. Residue C413 is part of the active site. Residues 619–781 form the MOSC domain; that stretch reads GDAVAQWLSE…MTCGDVVIVE (163 aa). The residue at position 734 (S734) is a Phosphoserine.

It belongs to the class-V pyridoxal-phosphate-dependent aminotransferase family. MOCOS subfamily. Pyridoxal 5'-phosphate is required as a cofactor.

The enzyme catalyses Mo-molybdopterin + L-cysteine + AH2 = thio-Mo-molybdopterin + L-alanine + A + H2O. The protein operates within cofactor biosynthesis; molybdopterin biosynthesis. In terms of biological role, sulfurates the molybdenum cofactor. Sulfation of molybdenum is essential for xanthine dehydrogenase (XDH) and aldehyde oxidase (ADO) enzymes in which molybdenum cofactor is liganded by 1 oxygen and 1 sulfur atom in active form. This Drosophila erecta (Fruit fly) protein is Molybdenum cofactor sulfurase.